The following is an 850-amino-acid chain: Coiled-coil and C2 domain-containing protein 1B (850 aa).

Basic residues predominate over residues 1-10; the sequence is MPGPRPRKGP. Disordered stretches follow at residues 1-21, 54-73, and 114-145; these read MPGP…ETAK, LTGE…RAPL, and GVDE…EQPV. The segment covering 114–129 has biased composition (acidic residues); it reads GVDEETGLVDDSEETS. Residues 167-213 are a coiled coil; the sequence is LQALLEERIQNYREAAASAKEAGEAAKARRCERGLKTLESQLATVRK. Disordered regions lie at residues 215-277 and 436-525; these read GKIC…SDPD and FAEL…SPSV. Over residues 234 to 244 the composition is skewed to basic and acidic residues; the sequence is AHQERPSKDSE. The segment covering 440–450 has biased composition (pro residues); it reads PVPPGFPPIPG. Composition is skewed to low complexity over residues 489–502 and 511–524; these read PAQA…AQPL and EPKA…LSPS. Ser-585 bears the Phosphoserine mark. Thr-588 carries the post-translational modification Phosphothreonine. The region spanning 668-807 is the C2 domain; the sequence is DPPSHHFELK…EKECEIREIM (140 aa).

As to quaternary structure, interacts with CHMP4B. As to expression, expressed in epididymal sperm but not in testicular sperm (at protein level).

It localises to the nucleus. Its function is as follows. Transcription factor that binds specifically to the DRE (dual repressor element) and represses HTR1A gene transcription in neuronal cells. The sequence is that of Coiled-coil and C2 domain-containing protein 1B (Cc2d1b) from Rattus norvegicus (Rat).